Reading from the N-terminus, the 66-residue chain is Small ribosomal subunit protein bS21 (66 aa).

This sequence belongs to the bacterial ribosomal protein bS21 family.

The sequence is that of Small ribosomal subunit protein bS21 from Rickettsia akari (strain Hartford).